Consider the following 229-residue polypeptide: GTP cyclohydrolase 1 (229 aa).

The interval 1 to 21 (MDAKIKPLRAGKSADARTDFQ) is disordered. Zn(2+)-binding residues include C118, H121, and C189.

This sequence belongs to the GTP cyclohydrolase I family. In terms of assembly, toroid-shaped homodecamer, composed of two pentamers of five dimers.

The enzyme catalyses GTP + H2O = 7,8-dihydroneopterin 3'-triphosphate + formate + H(+). The protein operates within cofactor biosynthesis; 7,8-dihydroneopterin triphosphate biosynthesis; 7,8-dihydroneopterin triphosphate from GTP: step 1/1. The protein is GTP cyclohydrolase 1 of Rhodopseudomonas palustris (strain HaA2).